Consider the following 201-residue polypeptide: Xanthine phosphoribosyltransferase (201 aa).

Xanthine-binding residues include L20 and N27. A 5-phospho-alpha-D-ribose 1-diphosphate-binding site is contributed by 129–133 (ANGQA). K157 serves as a coordination point for xanthine.

The protein belongs to the purine/pyrimidine phosphoribosyltransferase family. Xpt subfamily. As to quaternary structure, homodimer.

It localises to the cytoplasm. The catalysed reaction is XMP + diphosphate = xanthine + 5-phospho-alpha-D-ribose 1-diphosphate. It participates in purine metabolism; XMP biosynthesis via salvage pathway; XMP from xanthine: step 1/1. Converts the preformed base xanthine, a product of nucleic acid breakdown, to xanthosine 5'-monophosphate (XMP), so it can be reused for RNA or DNA synthesis. The sequence is that of Xanthine phosphoribosyltransferase from Shouchella clausii (strain KSM-K16) (Alkalihalobacillus clausii).